The primary structure comprises 265 residues: Nitrogenase iron protein 2 (265 aa).

An ATP-binding site is contributed by 8 to 15 (GKGGIGKS). Position 91 (Cys-91) interacts with [4Fe-4S] cluster. Residue Arg-94 is modified to ADP-ribosylarginine; by dinitrogenase reductase ADP-ribosyltransferase. Cys-126 serves as a coordination point for [4Fe-4S] cluster.

It belongs to the NifH/BchL/ChlL family. Homodimer. [4Fe-4S] cluster is required as a cofactor. In terms of processing, the reversible ADP-ribosylation of Arg-94 inactivates the nitrogenase reductase and regulates nitrogenase activity.

The enzyme catalyses N2 + 8 reduced [2Fe-2S]-[ferredoxin] + 16 ATP + 16 H2O = H2 + 8 oxidized [2Fe-2S]-[ferredoxin] + 2 NH4(+) + 16 ADP + 16 phosphate + 6 H(+). The key enzymatic reactions in nitrogen fixation are catalyzed by the nitrogenase complex, which has 2 components: the iron protein and the molybdenum-iron protein. The polypeptide is Nitrogenase iron protein 2 (nifH2) (Methanothermobacter thermautotrophicus (strain ATCC 29096 / DSM 1053 / JCM 10044 / NBRC 100330 / Delta H) (Methanobacterium thermoautotrophicum)).